The following is a 159-amino-acid chain: MIDPDGFRPNVGIILTNDAGQVLWARRINQDAWQFPQGGINPDETPEDALYRELNEEVGLERDDVEILACTRGWLRYRLPQRLVRTHSQPLCIGQKQKWFLLRLLSNEQRVRMDLTGKPEFDGWRWVSYWYPLGQVVTFKREVYRRALKELAPRLLTRD.

A Nudix hydrolase domain is found at 6-149; sequence GFRPNVGIIL…KREVYRRALK (144 aa). A Nudix box motif is present at residues 38 to 59; that stretch reads GGINPDETPEDALYRELNEEVG.

Belongs to the Nudix hydrolase family. RppH subfamily. The cofactor is a divalent metal cation.

In terms of biological role, accelerates the degradation of transcripts by removing pyrophosphate from the 5'-end of triphosphorylated RNA, leading to a more labile monophosphorylated state that can stimulate subsequent ribonuclease cleavage. This chain is RNA pyrophosphohydrolase, found in Pseudomonas putida (strain ATCC 700007 / DSM 6899 / JCM 31910 / BCRC 17059 / LMG 24140 / F1).